The primary structure comprises 142 residues: Type II secretion system core protein G (142 aa).

The propeptide at Met1–Gly8 is leader sequence. Phe9 carries the N-methylphenylalanine modification. A helical transmembrane segment spans residues Phe9–Val29. The disordered stretch occupies residues Ser122–Lys142.

Belongs to the GSP G family. Type II secretion system is composed of four main components: the outer membrane complex, the inner membrane complex, the cytoplasmic secretion ATPase and the periplasm-spanning pseudopilus. Forms homomultimers. Cleaved by the prepilin peptidase. In terms of processing, methylated by prepilin peptidase at the amino group of the N-terminal phenylalanine once the leader sequence is cleaved.

The protein localises to the cell inner membrane. In terms of biological role, core component of the type II secretion system required for the energy-dependent secretion of extracellular factors such as proteases and toxins from the periplasm. Pseudopilin (pilin-like) protein that polymerizes to form the pseudopilus. Further polymerization triggers pseudopilus growth. The sequence is that of Type II secretion system core protein G from Klebsiella michiganensis (strain ATCC 8724 / DSM 4798 / JCM 20051 / NBRC 3318 / NRRL B-199 / KCTC 1686 / BUCSAV 143 / CCM 1901).